The primary structure comprises 388 residues: Oligogalacturonide lyase (388 aa).

It is found in the periplasm. The enzyme catalyses 4-(4-deoxy-alpha-D-galact-4-enuronosyl)-D-galacturonate = 2 5-dehydro-4-deoxy-D-glucuronate. The protein operates within glycan metabolism; pectin degradation; 2-dehydro-3-deoxy-D-gluconate from pectin: step 3/5. Involved in degradation of pectin, which causes soft-rod disease in plants. The protein is Oligogalacturonide lyase (ogl) of Pectobacterium atrosepticum (strain SCRI 1043 / ATCC BAA-672) (Erwinia carotovora subsp. atroseptica).